Consider the following 377-residue polypeptide: RIB43A-like with coiled-coils protein 2 (377 aa).

Residues 217-246 (NKNQVVELTERKRQEKQQEQEDNMTEITNL) are a coiled coil. Positions 354–377 (KQMNTASSSQPTEDYFSQFNTRSR) are disordered.

Belongs to the RIB43A family. In terms of assembly, microtubule inner protein component of sperm flagellar doublet microtubules.

Its subcellular location is the cytoplasm. The protein resides in the cytoskeleton. The protein localises to the cilium axoneme. It localises to the flagellum axoneme. Its function is as follows. Microtubule inner protein (MIP) part of the dynein-decorated doublet microtubules (DMTs) in cilia axoneme, which is required for motile cilia beating. This is RIB43A-like with coiled-coils protein 2 from Mus musculus (Mouse).